The following is a 220-amino-acid chain: Protein-L-isoaspartate O-methyltransferase (220 aa).

S69 is a catalytic residue.

It belongs to the methyltransferase superfamily. L-isoaspartyl/D-aspartyl protein methyltransferase family.

It localises to the cytoplasm. The catalysed reaction is [protein]-L-isoaspartate + S-adenosyl-L-methionine = [protein]-L-isoaspartate alpha-methyl ester + S-adenosyl-L-homocysteine. Catalyzes the methyl esterification of L-isoaspartyl residues in peptides and proteins that result from spontaneous decomposition of normal L-aspartyl and L-asparaginyl residues. It plays a role in the repair and/or degradation of damaged proteins. In Alcanivorax borkumensis (strain ATCC 700651 / DSM 11573 / NCIMB 13689 / SK2), this protein is Protein-L-isoaspartate O-methyltransferase.